Reading from the N-terminus, the 91-residue chain is Potassium channel toxin TdiKIK (91 aa).

The first 25 residues, 1-25 (MVATNRCCVFALLVALLLIHSLAEA), serve as a signal peptide directing secretion. Residues 26 to 44 (GKGKEVLGKIKNKLVEVKE) constitute a propeptide that is removed on maturation. Residues 58 to 91 (EYACPVIDKFCEDHCAAKNAIGKCDDFKCQCLNS) form the BetaSPN-type CS-alpha/beta domain. 3 cysteine pairs are disulfide-bonded: Cys-61-Cys-81, Cys-68-Cys-86, and Cys-72-Cys-88.

In terms of tissue distribution, expressed by the venom gland.

It is found in the secreted. In terms of biological role, the full peptide presents antibacterial and cytotoxic activities. The synthetic C-terminus (AA 33-76) inhibits voltage-gated potassium channels Kv1.1/KCNA1, Kv1.2/KCNA2, and Kv1.3/KCNA3. The protein is Potassium channel toxin TdiKIK of Tityus discrepans (Venezuelan scorpion).